We begin with the raw amino-acid sequence, 1470 residues long: Niemann-Pick type C1-related protein (1470 aa).

Residues 1–3 (MFV) are Cytoplasmic-facing. Residues 4-34 (KNFIHKLKELKQKSLDKFANLLYDYGGYVYD) lie within the membrane without spanning it. A topological domain (cytoplasmic) is located at residue arginine 35. A helical membrane pass occupies residues 36–56 (PCTFIICSLICCLLLTCGFYF). At 57–493 (KEHEKDIYKL…DEVDRISKID (437 aa)) the chain is on the extracellular side. Asparagine 78, asparagine 165, asparagine 294, and asparagine 361 each carry an N-linked (GlcNAc...) asparagine glycan. The chain crosses the membrane as a helical span at residues 494–514 (NLTRLLLLIGVLLIFMYALFN). The region spanning 494–653 (NLTRLLLLIG…LTFLLSFLCI (160 aa)) is the SSD domain. The Cytoplasmic segment spans residues 515 to 524 (NVTSVLYRSK). Residues 525–549 (PLCAVMGIFCGFLGFLSGSGFLYFL) form a helical membrane-spanning segment. Topologically, residues 550-554 (GVKSV) are extracellular. A helical membrane pass occupies residues 555-582 (PPAETVPFLVIGVGVDDVFVILNSYSLL). The Cytoplasmic segment spans residues 583–587 (FMVKD). Residues 588-619 (NKKRIQMCLKDSALAITVTTLTNIIAFLISAI) traverse the membrane as a helical segment. Over 620-622 (SPF) the chain is Extracellular. The chain crosses the membrane as a helical span at residues 623 to 659 (YSICAFSLFTASSLFFGYLMVLTFLLSFLCIEAKLEK). The Cytoplasmic portion of the chain corresponds to 660 to 663 (KKRN). Residues 664–673 (IFTGTFHLFR) lie within the membrane without spanning it. The Cytoplasmic segment spans residues 674–1057 (SIFMKSSKKN…IYEEPKGNIG (384 aa)). Residues 1058 to 1073 (KYFRSLVKNYYVPFLS) lie within the membrane without spanning it. A topological domain (cytoplasmic) is located at residue serine 1074. A helical membrane pass occupies residues 1075–1098 (RFGKTIVYIMFTIIIAMSIYGCTL). The Extracellular portion of the chain corresponds to 1099–1300 (MKKGIKYDKA…NHNVQMVCFH (202 aa)). The N-linked (GlcNAc...) asparagine glycan is linked to asparagine 1218. A helical transmembrane segment spans residues 1301–1334 (LSSIFNETDESIIEVTLINLGITILTILVVTAYI). Topologically, residues 1335-1337 (IKG) are cytoplasmic. The helical transmembrane segment at 1338–1361 (FYSCVIIALIIFLIDLCIFGFMCL) threads the bilayer. Topologically, residues 1362-1367 (CGITMN) are extracellular. Residues 1368 to 1394 (IISMVILVLSVGFSIDHTSHIVQAFSH) form a helical membrane-spanning segment. The Cytoplasmic segment spans residues 1395–1399 (SMGRT). The helical transmembrane segment at 1400 to 1431 (RDEKMKESLHLMIGPVLHSGLSTWFVISTLFF) threads the bilayer. Topologically, residues 1432 to 1434 (SNK) are extracellular. The helical transmembrane segment at 1435–1466 (DFTVIFFQTLSLVLFFSITFSSMFLPVLLSSF) threads the bilayer. Topologically, residues 1467–1470 (GPLH) are cytoplasmic.

The protein belongs to the patched family.

It is found in the cell membrane. The enzyme catalyses cholesterol(in) = cholesterol(out). Functionally, facilitates cholesterol efflux from membranes in a pH-dependent manner. Required for maintaining normal parasite plasma membrane lipid composition. Required for the proper functioning of digestive vacuole. Required for the viability of blood-stage parasites. The chain is Niemann-Pick type C1-related protein from Plasmodium falciparum (isolate 3D7).